The primary structure comprises 398 residues: Carbamoyl phosphate synthase large chain (398 aa).

In terms of domain architecture, ATP-grasp spans 1–187 (KLGVPQPEGG…LAKIAAKVIV (187 aa)). The interval 1 to 255 (KLGVPQPEGG…YKAELAADNV (255 aa)) is carbamoyl phosphate synthetic domain. ATP is bound by residues Arg32, Asp71, Leu73, Glu78, Gly103, Val104, His105, Ser106, Gln146, and Glu158. Residues Gln146, Glu158, and Asn160 each coordinate Mg(2+). Residues Gln146, Glu158, and Asn160 each coordinate Mn(2+). One can recognise an MGS-like domain in the interval 254 to 395 (NVLPLTGKVF…NEYHKEMEEE (142 aa)). The allosteric domain stretch occupies residues 256-398 (LPLTGKVFLS…HKEMEEENKV (143 aa)).

Belongs to the CarB family. Composed of two chains; the small (or glutamine) chain promotes the hydrolysis of glutamine to ammonia, which is used by the large (or ammonia) chain to synthesize carbamoyl phosphate. Tetramer of heterodimers (alpha,beta)4. Mg(2+) serves as cofactor. Mn(2+) is required as a cofactor.

The catalysed reaction is hydrogencarbonate + L-glutamine + 2 ATP + H2O = carbamoyl phosphate + L-glutamate + 2 ADP + phosphate + 2 H(+). The enzyme catalyses hydrogencarbonate + NH4(+) + 2 ATP = carbamoyl phosphate + 2 ADP + phosphate + 2 H(+). It functions in the pathway amino-acid biosynthesis; L-arginine biosynthesis; carbamoyl phosphate from bicarbonate: step 1/1. Its pathway is pyrimidine metabolism; UMP biosynthesis via de novo pathway; (S)-dihydroorotate from bicarbonate: step 1/3. Its function is as follows. Large subunit of the glutamine-dependent carbamoyl phosphate synthetase (CPSase). CPSase catalyzes the formation of carbamoyl phosphate from the ammonia moiety of glutamine, carbonate, and phosphate donated by ATP, constituting the first step of 2 biosynthetic pathways, one leading to arginine and/or urea and the other to pyrimidine nucleotides. The large subunit (synthetase) binds the substrates ammonia (free or transferred from glutamine from the small subunit), hydrogencarbonate and ATP and carries out an ATP-coupled ligase reaction, activating hydrogencarbonate by forming carboxy phosphate which reacts with ammonia to form carbamoyl phosphate. The polypeptide is Carbamoyl phosphate synthase large chain (Methanosarcina barkeri).